The chain runs to 234 residues: Thymidylate kinase (234 aa).

21–28 serves as a coordination point for ATP; that stretch reads GGEGTGKS.

This sequence belongs to the thymidylate kinase family.

The catalysed reaction is dTMP + ATP = dTDP + ADP. Phosphorylation of dTMP to form dTDP in both de novo and salvage pathways of dTTP synthesis. This Rhizobium meliloti (strain 1021) (Ensifer meliloti) protein is Thymidylate kinase.